Reading from the N-terminus, the 198-residue chain is MIEFVYPHTHLVAGVDEVGRGPLVGAVVTAAVILDPARPIVGLNDSKKLSEKRRLSLYDEIKEKALSWSLGRAEAHEIDELNILHATMLAMQRAVAGLHIAPEYVLIDGNRCPALPVPSMAVVKGDSRVAEISAASILAKVTRDAEMAALDIVFPQYGFAQHKGYPTAFHLEKLAQYGATAHHRRSFAPVKRALGLVS.

The 189-residue stretch at 10 to 198 folds into the RNase H type-2 domain; the sequence is HLVAGVDEVG…PVKRALGLVS (189 aa). 3 residues coordinate a divalent metal cation: Asp-16, Glu-17, and Asp-108.

It belongs to the RNase HII family. The cofactor is Mn(2+). It depends on Mg(2+) as a cofactor.

It localises to the cytoplasm. The catalysed reaction is Endonucleolytic cleavage to 5'-phosphomonoester.. Its function is as follows. Endonuclease that specifically degrades the RNA of RNA-DNA hybrids. This chain is Ribonuclease HII, found in Salmonella schwarzengrund (strain CVM19633).